The primary structure comprises 227 residues: MPEINTNHLDKQQVQLLAEMCILIDENDNKIGAETKKNCHLNENIEKGLLHRAFSVFLFNTENKLLLQQRSDAKITFPGCFTNTCCSHPLSNPAELEESDALGVRRAAQRRLKAELGIPLEEVPPEEINYLTRIHYKAQSDGIWGEHEIDYILLVRKNVTLNPDPNEIKSYCYVSKEELKELLKKAASGEIKITPWFKIIAATFLFKWWDNLNHLNQFVDHEKIYRM.

Position 36 (lysine 36) interacts with substrate. Mg(2+) is bound by residues histidine 40 and histidine 51. Residues 49 to 199 (LLHRAFSVFL…EIKITPWFKI (151 aa)) form the Nudix hydrolase domain. Residues arginine 70 and lysine 74 each coordinate substrate. The active site involves cysteine 86. Residue serine 87 participates in substrate binding. Mg(2+) is bound by residues glutamate 146 and glutamate 148. Residue glutamate 148 is part of the active site. Residue lysine 176 is modified to N6-acetyllysine. The Microbody targeting signal signature appears at 225 to 227 (YRM).

It belongs to the IPP isomerase type 1 family. Monomer. Mg(2+) serves as cofactor.

It localises to the peroxisome. The enzyme catalyses isopentenyl diphosphate = dimethylallyl diphosphate. The protein operates within isoprenoid biosynthesis; dimethylallyl diphosphate biosynthesis; dimethylallyl diphosphate from isopentenyl diphosphate: step 1/1. In terms of biological role, catalyzes the 1,3-allylic rearrangement of the homoallylic substrate isopentenyl (IPP) to its highly electrophilic allylic isomer, dimethylallyl diphosphate (DMAPP). In Homo sapiens (Human), this protein is Isopentenyl-diphosphate Delta-isomerase 1 (IDI1).